Reading from the N-terminus, the 307-residue chain is Auxiliary protein GraX (307 aa).

As to quaternary structure, homodimer. Interacts with GraR and GraS.

Functionally, plays a role in resistance against cationic antimicrobial peptides (CAMPs). Facilitates the activation of GraS to transduce the signal to GraR. The polypeptide is Auxiliary protein GraX (graX) (Staphylococcus aureus (strain NCTC 8325 / PS 47)).